Consider the following 312-residue polypeptide: Ribosomal protein uL3 glutamine methyltransferase (312 aa).

This sequence belongs to the protein N5-glutamine methyltransferase family. PrmB subfamily.

The catalysed reaction is L-glutaminyl-[ribosomal protein uL3] + S-adenosyl-L-methionine = N(5)-methyl-L-glutaminyl-[ribosomal protein uL3] + S-adenosyl-L-homocysteine + H(+). Functionally, methylates large ribosomal subunit protein uL3 on a specific glutamine residue. The polypeptide is Ribosomal protein uL3 glutamine methyltransferase (Xylella fastidiosa (strain 9a5c)).